Reading from the N-terminus, the 203-residue chain is Large ribosomal subunit protein bL25 (203 aa).

It belongs to the bacterial ribosomal protein bL25 family. CTC subfamily. As to quaternary structure, part of the 50S ribosomal subunit; part of the 5S rRNA/L5/L18/L25 subcomplex. Contacts the 5S rRNA. Binds to the 5S rRNA independently of L5 and L18.

Its function is as follows. This is one of the proteins that binds to the 5S RNA in the ribosome where it forms part of the central protuberance. The protein is Large ribosomal subunit protein bL25 of Rickettsia africae (strain ESF-5).